The primary structure comprises 604 residues: Beta-(1--&gt;2)glucan export ATP-binding/permease protein NdvA (604 aa).

Residues 21–311 (GWILAFANLL…VVSFINSVFM (291 aa)) enclose the ABC transmembrane type-1 domain. Transmembrane regions (helical) follow at residues 22–42 (WILA…PVLF), 68–88 (LLGA…AVAL), 146–166 (EHFA…YINW), 168–188 (LAIL…LVVH), 238–258 (LLAL…ITRA), and 285–305 (IVMF…VVSF). The region spanning 345–579 (VEFKDVSFSY…QGHFAALARA (235 aa)) is the ABC transporter domain. Residue 378-385 (GATGAGKS) participates in ATP binding.

The protein belongs to the ABC transporter superfamily. Beta-(1--&gt;2)glucan exporter (TC 3.A.1.108.1) family. In terms of assembly, homodimer.

The protein localises to the cell inner membrane. It catalyses the reaction [(1-&gt;2)-beta-D-glucosyl](n)(in) + ATP + H2O = [(1-&gt;2)-beta-D-glucosyl](n)(out) + ADP + phosphate + H(+). In terms of biological role, involved in beta-(1--&gt;2)glucan export. Transmembrane domains (TMD) form a pore in the inner membrane and the ATP-binding domain (NBD) is responsible for energy generation. The polypeptide is Beta-(1--&gt;2)glucan export ATP-binding/permease protein NdvA (Rhodopseudomonas palustris (strain BisB18)).